A 222-amino-acid polypeptide reads, in one-letter code: Germin-like protein subfamily 1 member 4 (222 aa).

The N-terminal stretch at 1-24 (MEGLLQFLLAKIILLALASSFVYC) is a signal peptide. Cys-34 and Cys-50 are joined by a disulfide. Residue Asn-38 is glycosylated (N-linked (GlcNAc...) asparagine). The 152-residue stretch at 64–215 (SGLNVPGNTI…AFALDYNKVK (152 aa)) folds into the Cupin type-1 domain. Positions 112 and 114 each coordinate Mn(2+). The N-linked (GlcNAc...) asparagine glycan is linked to Asn-139. Position 161 (His-161) interacts with Mn(2+).

This sequence belongs to the germin family. In terms of assembly, oligomer (believed to be a pentamer but probably hexamer).

The protein localises to the secreted. The protein resides in the extracellular space. It localises to the apoplast. Functionally, may play a role in plant defense. Probably has no oxalate oxidase activity even if the active site is conserved. The polypeptide is Germin-like protein subfamily 1 member 4 (Arabidopsis thaliana (Mouse-ear cress)).